Reading from the N-terminus, the 621-residue chain is NADPH-dependent diflavin oxidoreductase 1 (621 aa).

Residues 6-168 enclose the Flavodoxin-like domain; the sequence is IAVLYGSETG…VYFEFEKRII (163 aa). FMN contacts are provided by residues 12–17, 59–62, 106–115, and E142; these read SETGNA, STTG, and LGDSSYPKFN. One can recognise an FAD-binding FR-type domain in the interval 224-489; it reads KLIKTGTITL…VGPGVGLAPL (266 aa). FAD is bound by residues R381, 411-414, and 443-446; these read RLYS and GVCT. NADP(+) is bound by residues 536-537 and 545-549; these read SR and TKYVQ. W621 contributes to the FAD binding site.

It belongs to the NADPH-dependent diflavin oxidoreductase NDOR1 family. This sequence in the N-terminal section; belongs to the flavodoxin family. The protein in the C-terminal section; belongs to the flavoprotein pyridine nucleotide cytochrome reductase family. Interacts with DRE2; as part of the cytosolic iron-sulfur (Fe-S) protein assembly (CIA) machinery. FAD is required as a cofactor. Requires FMN as cofactor.

It localises to the cytoplasm. The protein localises to the mitochondrion. The enzyme catalyses 2 oxidized [2Fe-2S]-[protein] + NADPH = 2 reduced [2Fe-2S]-[protein] + NADP(+) + H(+). NADPH-dependent reductase which is a central component of the cytosolic iron-sulfur (Fe-S) protein assembly (CIA) machinery. Transfers electrons from NADPH via its FAD and FMN prosthetic groups to the [2Fe-2S] cluster of DRE2, another key component of the CIA machinery. In turn, this reduced cluster provides electrons for assembly of cytosolic iron-sulfur cluster proteins. Positively controls H(2)O(2)-induced cell death. This chain is NADPH-dependent diflavin oxidoreductase 1, found in Candida glabrata (strain ATCC 2001 / BCRC 20586 / JCM 3761 / NBRC 0622 / NRRL Y-65 / CBS 138) (Yeast).